Here is a 493-residue protein sequence, read N- to C-terminus: MERYVLSLDEGTTSARAIIFDRESNIIGLGQYEFPQHYPKPGWVEHNPEEIWDAQFRAIKTALERAKVEPSQIAAIGVTNQRETTIVFDRDGKPLYNAIVWQCRRTAEMVEEIKREYGDMIKGKTGLVPDAYFSASKLKWLLDNVPGLREKAEKGEVLFGTVDTFLIYRLTGEHVTDYSNASRTMLFNIKRLDWDDELLEIFGIPEGILPEVRESSEVYGYTKKELLGAEIPVSGDAGDQQAALFGQAGFETGMVKATYGTGSFILANTGKTVRYSDNLLTTIAWGLNGKVTYALEGSIFVTGAAVQWLRDGIKIIKKASETEELATKLESNEGVYFVPAFVGLGAPYWDQFARGLIIGITRGTGREHLARATLEAIAYLTRDVIEEMEKLVGIKELRVDGGATANDFLMQFQADILNRRVVRPVVKETTALGAAYLAGLAVDYWESLEEIESLWKVEKVFEPGMDEETRRKLYHGWKEAVKRAMGWAKVVGI.

Residue Thr12 participates in ADP binding. Residues Thr12, Thr13, and Ser14 each coordinate ATP. Position 12 (Thr12) interacts with sn-glycerol 3-phosphate. Arg16 is an ADP binding site. Positions 82, 83, 132, and 239 each coordinate sn-glycerol 3-phosphate. Residues Arg82, Glu83, Tyr132, Asp239, and Gln240 each coordinate glycerol. ADP contacts are provided by Thr261 and Gly303. Positions 261, 303, 307, and 402 each coordinate ATP. ADP contacts are provided by Gly402 and Asn406.

The protein belongs to the FGGY kinase family.

The catalysed reaction is glycerol + ATP = sn-glycerol 3-phosphate + ADP + H(+). It functions in the pathway polyol metabolism; glycerol degradation via glycerol kinase pathway; sn-glycerol 3-phosphate from glycerol: step 1/1. In terms of biological role, key enzyme in the regulation of glycerol uptake and metabolism. Catalyzes the phosphorylation of glycerol to yield sn-glycerol 3-phosphate. The protein is Glycerol kinase of Thermococcus gammatolerans (strain DSM 15229 / JCM 11827 / EJ3).